The following is a 351-amino-acid chain: Peptide chain release factor 1 (351 aa).

An N5-methylglutamine modification is found at Gln-229.

It belongs to the prokaryotic/mitochondrial release factor family. In terms of processing, methylated by PrmC. Methylation increases the termination efficiency of RF1.

It localises to the cytoplasm. Peptide chain release factor 1 directs the termination of translation in response to the peptide chain termination codons UAG and UAA. The protein is Peptide chain release factor 1 of Cereibacter sphaeroides (strain ATCC 17023 / DSM 158 / JCM 6121 / CCUG 31486 / LMG 2827 / NBRC 12203 / NCIMB 8253 / ATH 2.4.1.) (Rhodobacter sphaeroides).